A 108-amino-acid chain; its full sequence is Putative lipid-binding protein AIR1B (108 aa).

An N-terminal signal peptide occupies residues 1–23; sequence MAPRTSLALFVSLNLLFFTCTSA. 3 disulfides stabilise this stretch: Cys-28-Cys-55, Cys-35-Cys-54, and Cys-71-Cys-107.

The protein belongs to the plant LTP family. PEARLI1 subfamily.

It is found in the secreted. The sequence is that of Putative lipid-binding protein AIR1B (AIR1B) from Arabidopsis thaliana (Mouse-ear cress).